We begin with the raw amino-acid sequence, 397 residues long: Methylthioribose kinase (397 aa).

Residues Asn-43, Lys-60, and 114–116 (EDL) each bind ATP. Asp-232 provides a ligand contact to substrate. An ATP-binding site is contributed by 249–251 (DPE). Substrate is bound at residue Arg-340.

Belongs to the methylthioribose kinase family. In terms of assembly, homodimer.

It carries out the reaction 5-(methylsulfanyl)-D-ribose + ATP = 5-(methylsulfanyl)-alpha-D-ribose 1-phosphate + ADP + H(+). Its pathway is amino-acid biosynthesis; L-methionine biosynthesis via salvage pathway; S-methyl-5-thio-alpha-D-ribose 1-phosphate from S-methyl-5'-thioadenosine (hydrolase route): step 2/2. In terms of biological role, catalyzes the phosphorylation of methylthioribose into methylthioribose-1-phosphate. The chain is Methylthioribose kinase from Bacillus pumilus (strain SAFR-032).